Reading from the N-terminus, the 572-residue chain is Mitochondrial distribution and morphology protein 34 (572 aa).

The 195-residue stretch at 1–195 (MAFNFNWSPL…LPAIIHRLSL (195 aa)) folds into the SMP-LTD domain. Disordered regions lie at residues 210 to 239 (TQAE…VDAL), 330 to 423 (SASI…PLSP), and 455 to 482 (RDMG…TPRA). Polar residues predominate over residues 330–347 (SASIASMQTRSSTPSHTF). Over residues 358-370 (RHSKAHSRKRKKR) the composition is skewed to basic residues. The span at 371–381 (VVDLRRPKTTD) shows a compositional bias: basic and acidic residues. Composition is skewed to polar residues over residues 387–400 (SDES…SAPS) and 460–480 (PSST…SATP).

This sequence belongs to the MDM34 family. As to quaternary structure, component of the ER-mitochondria encounter structure (ERMES) or MDM complex, composed of mmm1, mdm10, mdm12 and mdm34.

The protein resides in the mitochondrion outer membrane. Component of the ERMES/MDM complex, which serves as a molecular tether to connect the endoplasmic reticulum (ER) and mitochondria. Components of this complex are involved in the control of mitochondrial shape and protein biogenesis, and function in nonvesicular lipid trafficking between the ER and mitochondria. Mdm34 is required for the interaction of the ER-resident membrane protein mmm1 and the outer mitochondrial membrane-resident beta-barrel protein mdm10. The sequence is that of Mitochondrial distribution and morphology protein 34 from Aspergillus clavatus (strain ATCC 1007 / CBS 513.65 / DSM 816 / NCTC 3887 / NRRL 1 / QM 1276 / 107).